A 399-amino-acid chain; its full sequence is Bone morphogenetic protein 8A (399 aa).

The signal sequence occupies residues 1 to 19; sequence MAMRPGPLWLLGLALCALG. A propeptide spanning residues 20–260 is cleaved from the precursor; it reads GGHGPRPPHT…ASQSPVRAPR (241 aa). A glycan (N-linked (GlcNAc...) asparagine) is linked at N155. Residues 257-286 are disordered; sequence RAPRAARPLKRRQPKKTNELPHPNKLPGIF. 3 disulfide bridges follow: C298-C364, C327-C396, and C331-C398. N340 carries an N-linked (GlcNAc...) asparagine glycan.

Belongs to the TGF-beta family. Homodimer; disulfide-linked. As to expression, expressed in testis. expressed in trophoblast cells of the labyrinthine region of the placenta and in the inner root sheath of hair follicles of early postnatal skin. Expressed predominantly in the neonatal mouse spermatogonia.

Its subcellular location is the secreted. Its function is as follows. Growth factor of the TGF-beta superfamily that plays important role in various biological processes, including spermatogenesis, osteogenesis, steroidogenesis as well as regulation of energy balance. Initiates the canonical BMP signaling cascade by associating with type I receptor BMPR1A and type II receptor BMPR2. Once all three components are bound together in a complex at the cell surface, BMPR2 phosphorylates and activates BMPR1A. In turn, BMPR1A propagates signal by phosphorylating SMAD1/5/8 that travel to the nucleus and act as activators and repressors of transcription of target genes. In addition, activates the SMAD2/3 pathway. The polypeptide is Bone morphogenetic protein 8A (Bmp8a) (Mus musculus (Mouse)).